The primary structure comprises 738 residues: Ent-kaurene synthase-like 1 (738 aa).

Asp-487, Asp-491, Asn-631, Asp-632, and Glu-639 together coordinate Mg(2+). The DDXXD motif signature appears at 487-491; the sequence is DDFFD.

Belongs to the terpene synthase family. Mg(2+) is required as a cofactor.

The enzyme catalyses ent-copalyl diphosphate = ent-kaur-16-ene + diphosphate. Its pathway is secondary metabolite biosynthesis; terpenoid biosynthesis. Functionally, diterpene cyclase involved in the biosynthesis of labdane-related diterpenoids (LRDs) natural products. Catalyzes the cyclization of ent-CDP into ent-kaurene. This chain is Ent-kaurene synthase-like 1, found in Ricinus communis (Castor bean).